The chain runs to 305 residues: MVETEEFIAEAKAEIREAIGDANAVIALSGGVDSSVAATLAYEAVGDQLTPVYVDTGLMRKGETEEIRETFSFMESLRVIEAQERFFDRLAGVTDPEEKRHVIGEGFIDEFETVANDVGADYLVQGTIYPDRIESEGNIKSHHNVGGLPDIVDFEGIVEPVRDLYKDEVREVARALGLEEVISERMPFPGPGLAVRIVGEVTPEKAAVAREATHVVEEELEEYDPWQAFAAVLGKATGVKGDNRVHGWVVAVRSVESRDGMTARAQELDWSTLQRIQSRITGENENVARVVYDVTHKPPATIEYE.

The region spanning 2–185 (VETEEFIAEA…LGLEEVISER (184 aa)) is the GMPS ATP-PPase domain. 29 to 35 (SGGVDSS) is an ATP binding site.

In terms of assembly, heterodimer composed of a glutamine amidotransferase subunit (A) and a GMP-binding subunit (B).

It catalyses the reaction XMP + L-glutamine + ATP + H2O = GMP + L-glutamate + AMP + diphosphate + 2 H(+). It functions in the pathway purine metabolism; GMP biosynthesis; GMP from XMP (L-Gln route): step 1/1. Its function is as follows. Catalyzes the synthesis of GMP from XMP. The chain is GMP synthase [glutamine-hydrolyzing] subunit B from Halorubrum lacusprofundi (strain ATCC 49239 / DSM 5036 / JCM 8891 / ACAM 34).